Consider the following 135-residue polypeptide: Small ribosomal subunit protein uS9 (135 aa).

Residues 96 to 135 form a disordered region; sequence SADNRKPLKTEGHLSRDPRAKERRKYGLKKARKAPQFSKR. The span at 97–115 shows a compositional bias: basic and acidic residues; it reads ADNRKPLKTEGHLSRDPRA. Basic residues predominate over residues 116–135; that stretch reads KERRKYGLKKARKAPQFSKR.

This sequence belongs to the universal ribosomal protein uS9 family.

This Prochlorococcus marinus (strain MIT 9313) protein is Small ribosomal subunit protein uS9.